A 105-amino-acid polypeptide reads, in one-letter code: Integration host factor subunit beta (105 aa).

It belongs to the bacterial histone-like protein family. In terms of assembly, heterodimer of an alpha and a beta chain.

In terms of biological role, this protein is one of the two subunits of integration host factor, a specific DNA-binding protein that functions in genetic recombination as well as in transcriptional and translational control. This is Integration host factor subunit beta from Nitrosomonas eutropha (strain DSM 101675 / C91 / Nm57).